A 503-amino-acid chain; its full sequence is Probable cytosol aminopeptidase (503 aa).

Positions 270 and 275 each coordinate Mn(2+). Residue Lys282 is part of the active site. Mn(2+) contacts are provided by Asp293, Asp352, and Glu354. The active site involves Arg356.

The protein belongs to the peptidase M17 family. The cofactor is Mn(2+).

It localises to the cytoplasm. It catalyses the reaction Release of an N-terminal amino acid, Xaa-|-Yaa-, in which Xaa is preferably Leu, but may be other amino acids including Pro although not Arg or Lys, and Yaa may be Pro. Amino acid amides and methyl esters are also readily hydrolyzed, but rates on arylamides are exceedingly low.. It carries out the reaction Release of an N-terminal amino acid, preferentially leucine, but not glutamic or aspartic acids.. Presumably involved in the processing and regular turnover of intracellular proteins. Catalyzes the removal of unsubstituted N-terminal amino acids from various peptides. This is Probable cytosol aminopeptidase from Klebsiella pneumoniae (strain 342).